A 328-amino-acid polypeptide reads, in one-letter code: MNNSAFTFQTLHPDTIMDALFEQGIRVDSGLTPLNSYENRVYQFQDEDRRRFVVKFYRPERWTADQILEEHQFALQLVNDEVPVAAPVAFNGQTLLNHQGFYFAVFPSVGGRQFEADNIDQMEAVGRYLGRMHQTGRKQLFIHRPTIGLNEYLIEPRKLFEDATLIPSGLKAAFLKATDELIAAVTAHWREDFTVLRLHGDCHAGNILWRDGPMFVDLDDARNGPAIQDLWMLLNGDKAEQRMQLETIIEAYEEFSEFDTAEIGLIEPLRAMRLVYYLAWLMRRWADPAFPKNFPWLTGEDYWLRQTATFIEQAKVLQEPPLQLTPMY.

Asp201 (proton acceptor) is an active-site residue. The Mg(2+) site is built by Asn206 and Asp217. Residue Asp217 is part of the active site.

Belongs to the SrkA/RdoA protein kinase family. In terms of assembly, monomer. Requires Mg(2+) as cofactor.

Its subcellular location is the cytoplasm. The enzyme catalyses L-seryl-[protein] + ATP = O-phospho-L-seryl-[protein] + ADP + H(+). The catalysed reaction is L-threonyl-[protein] + ATP = O-phospho-L-threonyl-[protein] + ADP + H(+). A protein kinase that phosphorylates Ser and Thr residues. Probably acts to suppress the effects of stress linked to accumulation of reactive oxygen species. Probably involved in the extracytoplasmic stress response. This Escherichia coli O157:H7 protein is Stress response kinase A.